A 1040-amino-acid polypeptide reads, in one-letter code: Multidrug resistance protein MdtB (1040 aa).

12 helical membrane passes run 25 to 45 (LLMV…PVAA), 342 to 362 (DTQF…YLFL), 369 to 389 (IIPG…MVFL), 396 to 416 (LTLM…IVVI), 440 to 460 (IGFT…PLLF), 472 to 492 (FAVT…TLTP), 537 to 557 (WLTL…WVFI), 863 to 883 (LGST…VLGV), 888 to 908 (FIHP…ALLA), 911 to 931 (IAGS…IGIV), 967 to 987 (PILM…LSTG), and 998 to 1018 (IGMV…TPVI).

Belongs to the resistance-nodulation-cell division (RND) (TC 2.A.6) family. MdtB subfamily. Part of a tripartite efflux system composed of MdtA, MdtB and MdtC. MdtB forms a heteromultimer with MdtC.

It localises to the cell inner membrane. This is Multidrug resistance protein MdtB from Citrobacter koseri (strain ATCC BAA-895 / CDC 4225-83 / SGSC4696).